Consider the following 325-residue polypeptide: Sulfite dehydrogenase subunit C (325 aa).

A run of 8 helical transmembrane segments spans residues F5–V25, F43–F63, E87–F107, L126–I146, F165–G185, N186–S206, V266–G286, and L290–F310.

Belongs to the DmsC family. Forms a heterotrimeric membrane-bound complex composed of a catalytic heterodimer (SoeAB) and a membrane anchor protein (SoeC).

The protein localises to the cell inner membrane. Its function is as follows. Part of the SoeABC complex that catalyzes the oxidation of sulfite to sulfate. SoeC probably anchors and stabilizes the catalytic subunits. The polypeptide is Sulfite dehydrogenase subunit C (Allochromatium vinosum (strain ATCC 17899 / DSM 180 / NBRC 103801 / NCIMB 10441 / D) (Chromatium vinosum)).